Reading from the N-terminus, the 520-residue chain is 1,4-alpha-glucan branching enzyme TTHA1902 (520 aa).

Residue Glu184 is the Nucleophile of the active site. Residues Arg265 and Gly282 each coordinate substrate. Asp353 (proton donor) is an active-site residue. 3 residues coordinate substrate: Trp404, Asp460, and Gln469.

The protein belongs to the glycosyl hydrolase 57 family.

It catalyses the reaction Transfers a segment of a (1-&gt;4)-alpha-D-glucan chain to a primary hydroxy group in a similar glucan chain.. Its pathway is glycan biosynthesis; glycogen biosynthesis. Its function is as follows. Catalyzes the formation of branch points in alpha-glucans by cleavage of an alpha-1,4 glycosidic bond and subsequent transfer of the cleaved-off oligosaccharide to a new alpha-1,6 position. The branch chain-length distribution of the reaction products shows degree of polymerization (DP) of 3 to 13, with two local maxima at DP 7 and DP 11. Exhibits an alpha-retaining catalytic mechanism. Is involved in glycogen biosynthesis. Shows a secondary activity, i.e. the hydrolysis of the substrate, being 4% of the total activity. Can use amylose as substrate but not alpha-1,4-linked oligosaccharides of 2-7 glucose residues, beta-cyclodextrin, 6-O-glucosyl-beta-cyclodextrin and 6-O-maltosyl-beta-cyclodextrin. Is not able to branch amylopectin further, it only hydrolyzes amylopectin. Thus, displays preference for linear and long substrates (amylose) over branched structures (amylopectin). The chain is 1,4-alpha-glucan branching enzyme TTHA1902 from Thermus thermophilus (strain ATCC 27634 / DSM 579 / HB8).